Here is a 309-residue protein sequence, read N- to C-terminus: Olfactory receptor 4A47 (309 aa).

At 1–23 the chain is on the extracellular side; that stretch reads MEPRKNVTDFVLLGFTQNPKEQK. A glycan (N-linked (GlcNAc...) asparagine) is linked at asparagine 6. Residues 24-47 form a helical membrane-spanning segment; it reads VLFVMFLLFYILTMVGNLLIVVTV. Topologically, residues 48–55 are cytoplasmic; it reads TVSETLGS. A helical membrane pass occupies residues 56-77; the sequence is PMYFFLAGLSFIDIIYSSSISP. Topologically, residues 78–98 are extracellular; sequence RLISGLFFGNNSISFQSCMAQ. N-linked (GlcNAc...) asparagine glycosylation occurs at asparagine 87. Cysteine 95 and cysteine 187 are disulfide-bonded. A helical transmembrane segment spans residues 99–118; sequence LFIEHIFGGSEVFLLLVMAY. Topologically, residues 119–137 are cytoplasmic; sequence DCYVAICKPLHYLVIMRQW. A helical transmembrane segment spans residues 138-156; that stretch reads VCVVLLVVSWVGGFLHSVF. Residues 157–193 are Extracellular-facing; sequence QLSIIYGLPFCGPNVIDHFFCDMYPLLKLVCTDTHAI. Residues 194 to 217 traverse the membrane as a helical segment; sequence GLLVVANGGLACTIVFLLLLISYG. At 218–233 the chain is on the cytoplasmic side; sequence VILHSLKNLSQKGRQK. The helical transmembrane segment at 234–256 threads the bilayer; the sequence is ALSTCSSHMTVVVFFFVPCIFMY. The Extracellular segment spans residues 257–267; the sequence is ARPARTFPIDK. The chain crosses the membrane as a helical span at residues 268 to 287; that stretch reads SVSVFYTVITPMLNPLIYTL. Topologically, residues 288 to 309 are cytoplasmic; the sequence is RNSEMTSAMKKLWRRDLISSST.

The protein belongs to the G-protein coupled receptor 1 family.

It is found in the cell membrane. Odorant receptor. The polypeptide is Olfactory receptor 4A47 (OR4A47) (Homo sapiens (Human)).